The following is a 207-amino-acid chain: Outer-membrane lipoprotein LolB (207 aa).

A signal peptide spans 1–21 (MPLPDFRLIRLLPLASLVLTA). The N-palmitoyl cysteine moiety is linked to residue C22. A lipid anchor (S-diacylglycerol cysteine) is attached at C22.

Belongs to the LolB family. In terms of assembly, monomer.

It localises to the cell outer membrane. Functionally, plays a critical role in the incorporation of lipoproteins in the outer membrane after they are released by the LolA protein. This is Outer-membrane lipoprotein LolB from Escherichia fergusonii (strain ATCC 35469 / DSM 13698 / CCUG 18766 / IAM 14443 / JCM 21226 / LMG 7866 / NBRC 102419 / NCTC 12128 / CDC 0568-73).